A 103-amino-acid polypeptide reads, in one-letter code: Small ribosomal subunit protein uS14c (103 aa).

The segment at 27 to 56 (SKKKIRSKVSPLSLSEKTKMQEKLQSLPRN) is disordered.

The protein belongs to the universal ribosomal protein uS14 family. As to quaternary structure, part of the 30S ribosomal subunit.

The protein resides in the plastid. Its subcellular location is the chloroplast. Binds 16S rRNA, required for the assembly of 30S particles. The chain is Small ribosomal subunit protein uS14c from Zea mays (Maize).